A 234-amino-acid polypeptide reads, in one-letter code: Purine nucleoside phosphorylase DeoD-type (234 aa).

His4 contacts a purine D-ribonucleoside. Phosphate is bound by residues Gly20, Arg24, Arg43, and 87-90 (RIGS). Residues 179 to 181 (DME) and 203 to 204 (SD) contribute to the a purine D-ribonucleoside site. Asp204 serves as the catalytic Proton donor.

Belongs to the PNP/UDP phosphorylase family. As to quaternary structure, homohexamer; trimer of homodimers.

It catalyses the reaction a purine D-ribonucleoside + phosphate = a purine nucleobase + alpha-D-ribose 1-phosphate. The catalysed reaction is a purine 2'-deoxy-D-ribonucleoside + phosphate = a purine nucleobase + 2-deoxy-alpha-D-ribose 1-phosphate. Functionally, catalyzes the reversible phosphorolytic breakdown of the N-glycosidic bond in the beta-(deoxy)ribonucleoside molecules, with the formation of the corresponding free purine bases and pentose-1-phosphate. This is Purine nucleoside phosphorylase DeoD-type from Shewanella oneidensis (strain ATCC 700550 / JCM 31522 / CIP 106686 / LMG 19005 / NCIMB 14063 / MR-1).